We begin with the raw amino-acid sequence, 369 residues long: CCA-adding enzyme (369 aa).

Residues G8 and R11 each coordinate ATP. Positions 8 and 11 each coordinate CTP. Positions 21 and 23 each coordinate Mg(2+). R91, R137, and R140 together coordinate ATP. CTP contacts are provided by R91, R137, and R140.

Belongs to the tRNA nucleotidyltransferase/poly(A) polymerase family. Bacterial CCA-adding enzyme type 2 subfamily. Requires Mg(2+) as cofactor.

The catalysed reaction is a tRNA precursor + 2 CTP + ATP = a tRNA with a 3' CCA end + 3 diphosphate. It carries out the reaction a tRNA with a 3' CCA end + 2 CTP + ATP = a tRNA with a 3' CCACCA end + 3 diphosphate. Catalyzes the addition and repair of the essential 3'-terminal CCA sequence in tRNAs without using a nucleic acid template. Adds these three nucleotides in the order of C, C, and A to the tRNA nucleotide-73, using CTP and ATP as substrates and producing inorganic pyrophosphate. tRNA 3'-terminal CCA addition is required both for tRNA processing and repair. Also involved in tRNA surveillance by mediating tandem CCA addition to generate a CCACCA at the 3' terminus of unstable tRNAs. While stable tRNAs receive only 3'-terminal CCA, unstable tRNAs are marked with CCACCA and rapidly degraded. The chain is CCA-adding enzyme from Francisella tularensis subsp. novicida (strain U112).